A 1332-amino-acid chain; its full sequence is Aldehyde oxidase 1 (1332 aa).

One can recognise a 2Fe-2S ferredoxin-type domain in the interval S4 to V91. Positions 43, 48, 51, and 73 each coordinate [2Fe-2S] cluster. Q112 lines the Mo-molybdopterin pocket. [2Fe-2S] cluster is bound by residues C113, C116, C148, and C150. C150 contacts Mo-molybdopterin. An FAD-binding PCMH-type domain is found at F234–K419. FAD contacts are provided by residues V262–V269, A343, S352, H356, D365, and L409. Residues A800 to F801, M1041, G1082 to V1085, Q1197, and L1262 contribute to the Mo-molybdopterin site. E1264 functions as the Proton acceptor; for azaheterocycle hydroxylase activity in the catalytic mechanism.

Belongs to the xanthine dehydrogenase family. In terms of assembly, homodimer. The cofactor is [2Fe-2S] cluster. FAD serves as cofactor. Requires Mo-molybdopterin as cofactor. In terms of tissue distribution, expressed in liver.

Its subcellular location is the cytoplasm. It carries out the reaction an aldehyde + O2 + H2O = a carboxylate + H2O2 + H(+). It catalyses the reaction retinal + O2 + H2O = retinoate + H2O2 + H(+). With respect to regulation, inhibited by menadione and isovanillin. Not inhibited by allopurinol, a xanthine dehydrogenase potent inhibitor. Oxidase with broad substrate specificity, oxidizing aromatic azaheterocycles, such as N1-methylnicotinamide, N-methylphthalazinium and phthalazine, as well as aldehydes, such as benzaldehyde, retinal, pyridoxal, and vanillin. Plays a key role in the metabolism of xenobiotics and drugs containing aromatic azaheterocyclic substituents. Participates in the bioactivation of prodrugs such as famciclovir, catalyzing the oxidation step from 6-deoxypenciclovir to penciclovir, which is a potent antiviral agent. Is probably involved in the regulation of reactive oxygen species homeostasis. May be a prominent source of superoxide generation via the one-electron reduction of molecular oxygen. May also catalyze nitric oxide (NO) production via the reduction of nitrite to NO with NADH or aldehyde as electron donor. May play a role in adipogenesis. The chain is Aldehyde oxidase 1 from Cavia porcellus (Guinea pig).